A 510-amino-acid polypeptide reads, in one-letter code: Gelatinase (510 aa).

The signal sequence occupies residues 1 to 30 (MMKGNKILYILGTGIFVGSSCLFSSLFVAA). Positions 31-192 (EEQVYSESEV…IMEKQDLTEH (162 aa)) are excised as a propeptide. Position 324 (D324) interacts with Ca(2+). Residue H328 coordinates Zn(2+). E329 is a catalytic residue. Residues H332 and E352 each coordinate Zn(2+). S376 provides a ligand contact to Ca(2+). The Proton donor role is filled by H419.

The protein belongs to the peptidase M4 family.

It localises to the secreted. It carries out the reaction Preferential cleavage: Xaa-|-Leu, Xaa-|-Phe, Xaa-|-Tyr, Xaa-|-Ala.. Inhibited by L-leucine hydroxamate and phosphoramidon. Not inhibited by phenylmethanesulfonyl fluoride. Reversibly inactivated by straight-chain aliphatic alcohols. In terms of biological role, metalloprotease capable of the hydrolysis of insoluble hydrophobic substrates. Hydrolyzes azocoll and gelatin and, at a lower rate, soluble and insoluble collagens. Does not cleave short synthetic peptides. Preferentially hydrolyzes the 24-Phe-|-Phe-25 bond in the insulin B-chain, followed by the 5-His-|-Leu-6 bond. Inactivates endothelin-1, primarily by cleavage of the 5-Ser-|-Leu-6 and 16-His-|-Leu-17 bonds. Hydrolyzes the alpha chain of C3 to generate a C3b-like protein. Inhibits complement-mediated hemolysis and opsinization of bacteria. Hydrolyzes the insect antimicrobial peptide cecropin. Decreases the length of E.faecalis chains via the activation of autolysin. Degrades polymerized fibrin. The protein is Gelatinase of Enterococcus faecalis (strain ATCC 700802 / V583).